A 393-amino-acid polypeptide reads, in one-letter code: GDP-mannose:cellobiosyl-diphosphopolyprenol alpha-mannosyltransferase (393 aa).

It belongs to the glycosyltransferase group 1 family. Glycosyltransferase 4 subfamily.

The catalysed reaction is beta-D-Glc-(1-&gt;4)-alpha-D-Glc-di-trans,octa-cis-undecaprenyl diphosphate + GDP-alpha-D-mannose = alpha-D-Man-(1-&gt;3)-beta-D-Glc-(1-&gt;4)-alpha-D-Glc-1-di-trans,octa-cis-undecaprenyl diphosphate + GDP + H(+). In terms of biological role, involved in the biosynthesis of the exopolysaccharide acetan, a water-soluble polysaccharide involved in production of bacterial cellulose (BC). This chain is GDP-mannose:cellobiosyl-diphosphopolyprenol alpha-mannosyltransferase (aceC), found in Komagataeibacter xylinus (Gluconacetobacter xylinus).